We begin with the raw amino-acid sequence, 2005 residues long: Structural maintenance of chromosomes flexible hinge domain-containing protein 1 (2005 aa).

Residues 1–13 are compositionally biased toward gly residues; sequence MAAADGGGPGGAS. Positions 1–23 are disordered; the sequence is MAAADGGGPGGASVGTEEDGGGV. At Ala-2 the chain carries N-acetylalanine. The ATPase activity domain stretch occupies residues 111 to 702; sequence TKERIDFLPH…LSVTWPEGDE (592 aa). The residue at position 1349 (Lys-1349) is an N6-acetyllysine. Residues Lys-1374 and Lys-1496 each participate in a glycyl lysine isopeptide (Lys-Gly) (interchain with G-Cter in SUMO2) cross-link. Thr-1499 bears the Phosphothreonine mark. In terms of domain architecture, SMC hinge spans 1720–1847; the sequence is GDVLGKIAHL…DNLDAANHYR (128 aa). Lys-1802 is modified (N6-succinyllysine). Ser-1974 is modified (phosphoserine).

The protein belongs to the SMC family. Highly divergent. In terms of assembly, homodimer; homodimerizes via its SMC hinge domain. Interacts with LRIF1. Sumoylated with SUMO1.

The protein localises to the chromosome. The catalysed reaction is ATP + H2O = ADP + phosphate + H(+). Its function is as follows. Non-canonical member of the structural maintenance of chromosomes (SMC) protein family that plays a key role in epigenetic silencing by regulating chromatin architecture. Promotes heterochromatin formation in both autosomes and chromosome X, probably by mediating the merge of chromatin compartments. Plays a key role in chromosome X inactivation in females by promoting the spreading of heterochromatin. Recruited to inactivated chromosome X by Xist RNA and acts by mediating the merge of chromatin compartments: promotes random chromatin interactions that span the boundaries of existing structures, leading to create a compartment-less architecture typical of inactivated chromosome X. Required to facilitate Xist RNA spreading. Also required for silencing of a subset of clustered autosomal loci in somatic cells, such as the DUX4 locus. Has ATPase activity; may participate in structural manipulation of chromatin in an ATP-dependent manner as part of its role in gene expression regulation. Also plays a role in DNA repair: localizes to sites of DNA double-strand breaks in response to DNA damage to promote the repair of DNA double-strand breaks. Acts by promoting non-homologous end joining (NHEJ) and inhibiting homologous recombination (HR) repair. In Homo sapiens (Human), this protein is Structural maintenance of chromosomes flexible hinge domain-containing protein 1.